A 677-amino-acid polypeptide reads, in one-letter code: Methionine--tRNA ligase (677 aa).

A 'HIGH' region motif is present at residues 15 to 25 (PYANGPIHIGH). Residues C146, C149, C159, and C162 each coordinate Zn(2+). The short motif at 332–336 (KMSKS) is the 'KMSKS' region element. Residue K335 participates in ATP binding. The tRNA-binding domain occupies 576-677 (DFAKVDLRVA…DGAKPGMRIM (102 aa)).

It belongs to the class-I aminoacyl-tRNA synthetase family. MetG type 1 subfamily. Homodimer. Requires Zn(2+) as cofactor.

Its subcellular location is the cytoplasm. The enzyme catalyses tRNA(Met) + L-methionine + ATP = L-methionyl-tRNA(Met) + AMP + diphosphate. Its function is as follows. Is required not only for elongation of protein synthesis but also for the initiation of all mRNA translation through initiator tRNA(fMet) aminoacylation. The chain is Methionine--tRNA ligase from Idiomarina loihiensis (strain ATCC BAA-735 / DSM 15497 / L2-TR).